The primary structure comprises 155 residues: Ribosome maturation factor RimP (155 aa).

Belongs to the RimP family.

The protein localises to the cytoplasm. Functionally, required for maturation of 30S ribosomal subunits. This chain is Ribosome maturation factor RimP, found in Hamiltonella defensa subsp. Acyrthosiphon pisum (strain 5AT).